The chain runs to 230 residues: Endonuclease NucS (230 aa).

This sequence belongs to the NucS endonuclease family.

Its subcellular location is the cytoplasm. Its function is as follows. Cleaves both 3' and 5' ssDNA extremities of branched DNA structures. This chain is Endonuclease NucS, found in Corynebacterium glutamicum (strain R).